A 592-amino-acid chain; its full sequence is Bifunctional purine biosynthesis protein ATIC (592 aa).

Residue Met-1 is modified to N-acetylmethionine. Residues Ala-2–Cys-146 enclose the MGS-like domain. The segment at Ala-2 to Ser-198 is IMP cyclohydrolase. IMP-binding positions include Ser-12–Lys-14, Ser-34–Thr-37, Arg-64–Thr-67, Cys-101–Asn-102, and Asp-125–Ile-126. The active-site Proton donor/acceptor; for FAICAR cyclization activity is the Lys-137. Lys-199 carries the post-translational modification N6-acetyllysine. An AICAR formyltransferase region spans residues Lys-199–His-592. Residues Arg-207–Tyr-208, His-267, Gly-316, Asp-339, Asn-431, and Arg-451 each bind 5-amino-1-(5-phospho-beta-D-ribosyl)imidazole-4-carboxamide. Catalysis depends on His-267, which acts as the Proton acceptor; for AICAR formyltransferase activity. Position 452 (Ile-452) interacts with (6R)-10-formyltetrahydrofolate. Residue Phe-541 participates in 5-amino-1-(5-phospho-beta-D-ribosyl)imidazole-4-carboxamide binding. Residues Asp-546 and Ser-565–Ala-566 each bind (6R)-10-formyltetrahydrofolate. Arg-588 contacts 5-amino-1-(5-phospho-beta-D-ribosyl)imidazole-4-carboxamide.

The protein belongs to the PurH family. In terms of assembly, homodimer. Associates with internalized INSR complexes on Golgi/endosomal membranes. Interacts with INSR; ATIC together with PRKAA2/AMPK2 and HACD3/PTPLAD1 is proposed to be part of a signaling network regulating INSR autophosphorylation and endocytosis. Present in the heart, brain, placenta, lung, liver, skeletal muscle, kidney, pancreas.

The protein resides in the cytoplasm. It localises to the cytosol. The catalysed reaction is (6R)-10-formyltetrahydrofolate + 5-amino-1-(5-phospho-beta-D-ribosyl)imidazole-4-carboxamide = 5-formamido-1-(5-phospho-D-ribosyl)imidazole-4-carboxamide + (6S)-5,6,7,8-tetrahydrofolate. The enzyme catalyses 10-formyldihydrofolate + 5-amino-1-(5-phospho-beta-D-ribosyl)imidazole-4-carboxamide = 5-formamido-1-(5-phospho-D-ribosyl)imidazole-4-carboxamide + 7,8-dihydrofolate. It carries out the reaction IMP + H2O = 5-formamido-1-(5-phospho-D-ribosyl)imidazole-4-carboxamide. It catalyses the reaction 5-amino-1-(5-phospho-D-ribosyl)imidazole-4-thiocarboxamide + 10-formyldihydrofolate = 6-thio-IMP + 7,8-dihydrofolate + H2O. The protein operates within purine metabolism; IMP biosynthesis via de novo pathway; 5-formamido-1-(5-phospho-D-ribosyl)imidazole-4-carboxamide from 5-amino-1-(5-phospho-D-ribosyl)imidazole-4-carboxamide (10-formyl THF route): step 1/1. It functions in the pathway purine metabolism; IMP biosynthesis via de novo pathway; IMP from 5-formamido-1-(5-phospho-D-ribosyl)imidazole-4-carboxamide: step 1/1. AMP and XMP inhibit AICAR formyltransferase activity. AICAR formyltransferase activity is inhibited by N-(6-fluoro-1-oxo-1,2-dihydroisoquinolin-7-yl)-5- [(3R)-3-hydroxypyrrolidin-1-yl]thiophene-2-sulfonamide (LSN 3213128), which acts as a tumor suppression in cancer cell lines. In terms of biological role, bifunctional enzyme that catalyzes the last two steps of purine biosynthesis. Acts as a transformylase that incorporates a formyl group to the AMP analog AICAR (5-amino-1-(5-phospho-beta-D-ribosyl)imidazole-4-carboxamide) to produce the intermediate formyl-AICAR (FAICAR). Can use both 10-formyldihydrofolate and 10-formyltetrahydrofolate as the formyl donor in this reaction. Also catalyzes the cyclization of FAICAR to inosine monophosphate (IMP). Is able to convert thio-AICAR to 6-mercaptopurine ribonucleotide, an inhibitor of purine biosynthesis used in the treatment of human leukemias. Promotes insulin receptor/INSR autophosphorylation and is involved in INSR internalization. The sequence is that of Bifunctional purine biosynthesis protein ATIC from Homo sapiens (Human).